The sequence spans 558 residues: 2-isopropylmalate synthase (558 aa).

The Pyruvate carboxyltransferase domain occupies 28–304 (PIWCSVDLRD…DPELEFSNLN (277 aa)). Residues Asp-37, His-243, His-245, and Asn-279 each contribute to the Mg(2+) site. The interval 438 to 558 (NRSPYYLKNY…VSALNRSKLK (121 aa)) is regulatory domain.

The protein belongs to the alpha-IPM synthase/homocitrate synthase family. LeuA type 2 subfamily. Homodimer. It depends on Mg(2+) as a cofactor.

It is found in the cytoplasm. It catalyses the reaction 3-methyl-2-oxobutanoate + acetyl-CoA + H2O = (2S)-2-isopropylmalate + CoA + H(+). Its pathway is amino-acid biosynthesis; L-leucine biosynthesis; L-leucine from 3-methyl-2-oxobutanoate: step 1/4. In terms of biological role, catalyzes the condensation of the acetyl group of acetyl-CoA with 3-methyl-2-oxobutanoate (2-ketoisovalerate) to form 3-carboxy-3-hydroxy-4-methylpentanoate (2-isopropylmalate). The polypeptide is 2-isopropylmalate synthase (Clostridium acetobutylicum (strain ATCC 824 / DSM 792 / JCM 1419 / IAM 19013 / LMG 5710 / NBRC 13948 / NRRL B-527 / VKM B-1787 / 2291 / W)).